The chain runs to 422 residues: Glutamate-1-semialdehyde 2,1-aminomutase (422 aa).

Lys258 carries the post-translational modification N6-(pyridoxal phosphate)lysine.

This sequence belongs to the class-III pyridoxal-phosphate-dependent aminotransferase family. HemL subfamily. As to quaternary structure, homodimer. Pyridoxal 5'-phosphate is required as a cofactor.

It is found in the cytoplasm. The enzyme catalyses (S)-4-amino-5-oxopentanoate = 5-aminolevulinate. Its pathway is porphyrin-containing compound metabolism; protoporphyrin-IX biosynthesis; 5-aminolevulinate from L-glutamyl-tRNA(Glu): step 2/2. This Chlamydia trachomatis serovar L2 (strain ATCC VR-902B / DSM 19102 / 434/Bu) protein is Glutamate-1-semialdehyde 2,1-aminomutase.